Consider the following 205-residue polypeptide: Large ribosomal subunit protein uL3 (205 aa).

This sequence belongs to the universal ribosomal protein uL3 family. In terms of assembly, part of the 50S ribosomal subunit. Forms a cluster with proteins L14 and L19.

Its function is as follows. One of the primary rRNA binding proteins, it binds directly near the 3'-end of the 23S rRNA, where it nucleates assembly of the 50S subunit. The protein is Large ribosomal subunit protein uL3 of Bacteroides thetaiotaomicron (strain ATCC 29148 / DSM 2079 / JCM 5827 / CCUG 10774 / NCTC 10582 / VPI-5482 / E50).